The following is a 217-amino-acid chain: MINLILLGLPGAGKGTASESIVDKYHLAHISTGDMFREAMANETPVGLEAKSYIDKGNLVPDEVTAKLVEERLKQPDTKNGFILDGFPRTTVQAELLEDITKRLEKPLTNVIAIDVDEDVLIKRLSARYICKKCGATYNKISNPTKVEGTCDRCGGHEFFQREDDKPEVVKNRLEVNKKMNTPLRDFYEEKGILSTVNGEQTPEKVFEDIDKILSKD.

Residue 11-16 (GAGKGT) coordinates ATP. Residues 31 to 60 (STGDMFREAMANETPVGLEAKSYIDKGNLV) are NMP. AMP-binding positions include Thr32, Arg37, 58-60 (NLV), 86-89 (GFPR), and Gln93. The segment at 127 to 165 (ARYICKKCGATYNKISNPTKVEGTCDRCGGHEFFQREDD) is LID. Residue Arg128 participates in ATP binding. Zn(2+) is bound by residues Cys131 and Cys134. Residue 137–138 (TY) coordinates ATP. Residues Cys151 and Cys154 each contribute to the Zn(2+) site. Residues Arg162 and Arg173 each coordinate AMP. Residue Gln201 participates in ATP binding.

This sequence belongs to the adenylate kinase family. As to quaternary structure, monomer.

The protein resides in the cytoplasm. The catalysed reaction is AMP + ATP = 2 ADP. Its pathway is purine metabolism; AMP biosynthesis via salvage pathway; AMP from ADP: step 1/1. In terms of biological role, catalyzes the reversible transfer of the terminal phosphate group between ATP and AMP. Plays an important role in cellular energy homeostasis and in adenine nucleotide metabolism. The polypeptide is Adenylate kinase (Lactobacillus johnsonii (strain CNCM I-12250 / La1 / NCC 533)).